A 429-amino-acid polypeptide reads, in one-letter code: Saccharopine dehydrogenase-like oxidoreductase (429 aa).

N-acetylalanine is present on Ala2. The residue at position 217 (Ser217) is a Phosphoserine.

The protein belongs to the saccharopine dehydrogenase family.

This is Saccharopine dehydrogenase-like oxidoreductase (SCCPDH) from Bos taurus (Bovine).